A 248-amino-acid polypeptide reads, in one-letter code: Probable transcriptional regulatory protein RPD_4171 (248 aa).

The tract at residues methionine 1–serine 22 is disordered.

The protein belongs to the TACO1 family.

Its subcellular location is the cytoplasm. This is Probable transcriptional regulatory protein RPD_4171 from Rhodopseudomonas palustris (strain BisB5).